A 283-amino-acid chain; its full sequence is Ribosomal RNA small subunit methyltransferase I (283 aa).

It belongs to the methyltransferase superfamily. RsmI family.

The protein localises to the cytoplasm. It carries out the reaction cytidine(1402) in 16S rRNA + S-adenosyl-L-methionine = 2'-O-methylcytidine(1402) in 16S rRNA + S-adenosyl-L-homocysteine + H(+). Functionally, catalyzes the 2'-O-methylation of the ribose of cytidine 1402 (C1402) in 16S rRNA. The polypeptide is Ribosomal RNA small subunit methyltransferase I (Haemophilus influenzae (strain ATCC 51907 / DSM 11121 / KW20 / Rd)).